The sequence spans 318 residues: Isoflavone reductase (318 aa).

NADP(+) contacts are provided by residues Gly-11–Gly-17, Arg-36, and Lys-44. Catalysis depends on Lys-144, which acts as the Proton acceptor. Position 148 (Arg-148) interacts with NADP(+).

It belongs to the NmrA-type oxidoreductase family. Isoflavone reductase subfamily.

It catalyses the reaction (3R)-vestitone + NADP(+) = 2'-hydroxyformononetin + NADPH + 2 H(+). Its pathway is phytoalexin biosynthesis; pterocarpan phytoalexin biosynthesis. In terms of biological role, reduces achiral isoflavones to chiral isoflavanones during the biosynthesis of chiral pterocarpan phytoalexins. In Cicer arietinum (Chickpea), this protein is Isoflavone reductase (IFR).